Reading from the N-terminus, the 68-residue chain is Protein SlyX homolog (68 aa).

It belongs to the SlyX family.

The protein is Protein SlyX homolog of Pseudomonas fluorescens (strain ATCC BAA-477 / NRRL B-23932 / Pf-5).